Reading from the N-terminus, the 311-residue chain is Protoheme IX farnesyltransferase 1 (311 aa).

The next 9 membrane-spanning stretches (helical) occupy residues 31-51 (VMAL…GAVN), 52-72 (PVIA…AGAL), 97-117 (VTPG…VMTL), 119-139 (VLVG…YIVI), 152-172 (IVIG…AATG), 179-199 (LVLF…LALF), 225-245 (ILAY…FGFT), 247-267 (GYYG…SWKV), and 281-301 (LFAY…ADTI).

Belongs to the UbiA prenyltransferase family. Protoheme IX farnesyltransferase subfamily.

The protein localises to the cell inner membrane. It catalyses the reaction heme b + (2E,6E)-farnesyl diphosphate + H2O = Fe(II)-heme o + diphosphate. The protein operates within porphyrin-containing compound metabolism; heme O biosynthesis; heme O from protoheme: step 1/1. Its function is as follows. Converts heme B (protoheme IX) to heme O by substitution of the vinyl group on carbon 2 of heme B porphyrin ring with a hydroxyethyl farnesyl side group. In Mesorhizobium japonicum (strain LMG 29417 / CECT 9101 / MAFF 303099) (Mesorhizobium loti (strain MAFF 303099)), this protein is Protoheme IX farnesyltransferase 1.